The sequence spans 412 residues: 8-amino-7-oxononanoate synthase (412 aa).

Residue 106-107 (GY) coordinates pyridoxal 5'-phosphate. His-131 lines the substrate pocket. Residues Ser-187, His-219, and Thr-247 each coordinate pyridoxal 5'-phosphate. Lys-250 carries the post-translational modification N6-(pyridoxal phosphate)lysine. Thr-370 is a substrate binding site.

This sequence belongs to the class-II pyridoxal-phosphate-dependent aminotransferase family. BioF subfamily. Homodimer. It depends on pyridoxal 5'-phosphate as a cofactor.

The enzyme catalyses 6-carboxyhexanoyl-[ACP] + L-alanine + H(+) = (8S)-8-amino-7-oxononanoate + holo-[ACP] + CO2. It participates in cofactor biosynthesis; biotin biosynthesis. In terms of biological role, 8-amino-7-oxononanoate synthase; part of the cluster involved in the biosynthesis of biotin (also known as vitamin B8 or vitamin H), a water-soluble vitamin that functions as a prosthetic group of many carboxylases, such as acetyl-CoA carboxylase and pyruvate carboxylase. Catalyzes the decarboxylative condensation of pimeloyl-[acyl-carrier protein] and L-alanine to produce 8-amino-7-oxononanoate (AON). In Emericella nidulans (strain FGSC A4 / ATCC 38163 / CBS 112.46 / NRRL 194 / M139) (Aspergillus nidulans), this protein is 8-amino-7-oxononanoate synthase.